Consider the following 465-residue polypeptide: UDP-N-acetylmuramate--L-alanine ligase (465 aa).

Position 112–118 (112–118 (GTHGKTT)) interacts with ATP.

This sequence belongs to the MurCDEF family.

The protein localises to the cytoplasm. The catalysed reaction is UDP-N-acetyl-alpha-D-muramate + L-alanine + ATP = UDP-N-acetyl-alpha-D-muramoyl-L-alanine + ADP + phosphate + H(+). It participates in cell wall biogenesis; peptidoglycan biosynthesis. Functionally, cell wall formation. This Burkholderia orbicola (strain MC0-3) protein is UDP-N-acetylmuramate--L-alanine ligase.